Reading from the N-terminus, the 266-residue chain is Large ribosomal subunit protein uL4 (266 aa).

The protein belongs to the universal ribosomal protein uL4 family. In terms of assembly, part of the 50S ribosomal subunit.

Functionally, one of the primary rRNA binding proteins, this protein initially binds near the 5'-end of the 23S rRNA. It is important during the early stages of 50S assembly. It makes multiple contacts with different domains of the 23S rRNA in the assembled 50S subunit and ribosome. Forms part of the polypeptide exit tunnel. The sequence is that of Large ribosomal subunit protein uL4 from Sulfolobus acidocaldarius (strain ATCC 33909 / DSM 639 / JCM 8929 / NBRC 15157 / NCIMB 11770).